Here is a 406-residue protein sequence, read N- to C-terminus: ATP synthase subunit a (406 aa).

2 stretches are compositionally biased toward low complexity: residues 22–31 and 43–59; these read AGEHGAPAPE and DAAG…AEHG. Positions 22–76 are disordered; that stretch reads AGEHGAPAPEVATPAEGHGARDAAGAATDPHGAAAEHGAAAHEDPAQHGAAGAEA. 6 helical membrane passes run 151-171, 209-229, 232-252, 278-298, 304-324, and 351-371; these read KHVV…FAAV, FVPY…FGLV, AATA…TFLI, LWPL…TKPF, LFAN…LIFA, and VQAY…VAHH. A disordered region spans residues 375-406; it reads DEHEEHGHGAAATGGAHGSHGSHVAGASPGHG. Residues 383–406 show a composition bias toward low complexity; it reads GAAATGGAHGSHGSHVAGASPGHG.

The protein belongs to the ATPase A chain family. F-type ATPases have 2 components, CF(1) - the catalytic core - and CF(0) - the membrane proton channel. CF(1) has five subunits: alpha(3), beta(3), gamma(1), delta(1), epsilon(1). CF(0) has three main subunits: a(1), b(2) and c(9-12). The alpha and beta chains form an alternating ring which encloses part of the gamma chain. CF(1) is attached to CF(0) by a central stalk formed by the gamma and epsilon chains, while a peripheral stalk is formed by the delta and b chains.

Its subcellular location is the cell inner membrane. In terms of biological role, key component of the proton channel; it plays a direct role in the translocation of protons across the membrane. This Anaeromyxobacter sp. (strain Fw109-5) protein is ATP synthase subunit a.